The following is a 124-amino-acid chain: MAWTLLLLVLLSHCTGSLSQPVLTQPSSHSASSGASVRLTCMLSSGFSVGDFWIRWYQQKPGNPPRYLLYYHSDSNKGQGSGVPSRFSGSNDASANAGILRISGLQPEDEADYYCGTWHSNSKT.

Residues Met-1–Ser-19 form the signal peptide. Residues Gln-20–Ser-44 form a framework-1 region. The region spanning Pro-21 to Thr-124 is the Ig-like domain. An intrachain disulfide couples Cys-41 to Cys-115. Residues Ser-45–Trp-53 form a complementarity-determining-1 region. Residues Ile-54 to Tyr-70 form a framework-2 region. Positions Tyr-71–Lys-77 are complementarity-determining-2. Residues Gly-78–Cys-115 are framework-3. Positions Gly-116–Thr-124 are complementarity-determining-3.

Immunoglobulins are composed of two identical heavy chains and two identical light chains; disulfide-linked.

It localises to the secreted. Its subcellular location is the cell membrane. Its function is as follows. V region of the variable domain of immunoglobulin light chains that participates in the antigen recognition. Immunoglobulins, also known as antibodies, are membrane-bound or secreted glycoproteins produced by B lymphocytes. In the recognition phase of humoral immunity, the membrane-bound immunoglobulins serve as receptors which, upon binding of a specific antigen, trigger the clonal expansion and differentiation of B lymphocytes into immunoglobulins-secreting plasma cells. Secreted immunoglobulins mediate the effector phase of humoral immunity, which results in the elimination of bound antigens. The antigen binding site is formed by the variable domain of one heavy chain, together with that of its associated light chain. Thus, each immunoglobulin has two antigen binding sites with remarkable affinity for a particular antigen. The variable domains are assembled by a process called V-(D)-J rearrangement and can then be subjected to somatic hypermutations which, after exposure to antigen and selection, allow affinity maturation for a particular antigen. The sequence is that of Immunoglobulin lambda variable 5-52 from Homo sapiens (Human).